Here is a 165-residue protein sequence, read N- to C-terminus: 2-C-methyl-D-erythritol 2,4-cyclodiphosphate synthase (165 aa).

Residues Asp-13 and His-15 each coordinate a divalent metal cation. 4-CDP-2-C-methyl-D-erythritol 2-phosphate-binding positions include 13–15 (DRH) and 39–40 (HS). Position 47 (His-47) interacts with a divalent metal cation. 4-CDP-2-C-methyl-D-erythritol 2-phosphate contacts are provided by residues 61-63 (DIG) and Phe-141.

Belongs to the IspF family. In terms of assembly, homotrimer. The cofactor is a divalent metal cation.

It catalyses the reaction 4-CDP-2-C-methyl-D-erythritol 2-phosphate = 2-C-methyl-D-erythritol 2,4-cyclic diphosphate + CMP. The protein operates within isoprenoid biosynthesis; isopentenyl diphosphate biosynthesis via DXP pathway; isopentenyl diphosphate from 1-deoxy-D-xylulose 5-phosphate: step 4/6. Its function is as follows. Involved in the biosynthesis of isopentenyl diphosphate (IPP) and dimethylallyl diphosphate (DMAPP), two major building blocks of isoprenoid compounds. Catalyzes the conversion of 4-diphosphocytidyl-2-C-methyl-D-erythritol 2-phosphate (CDP-ME2P) to 2-C-methyl-D-erythritol 2,4-cyclodiphosphate (ME-CPP) with a corresponding release of cytidine 5-monophosphate (CMP). The chain is 2-C-methyl-D-erythritol 2,4-cyclodiphosphate synthase from Thermotoga neapolitana (strain ATCC 49049 / DSM 4359 / NBRC 107923 / NS-E).